The primary structure comprises 1837 residues: Nucleoporin nup211 (1837 aa).

Coiled coils occupy residues 59 to 378 (EVNY…YDEI), 415 to 519 (YKQK…ELDL), and 559 to 625 (VFRN…QLRY). Thr650 bears the Phosphothreonine mark. Coiled-coil stretches lie at residues 661–1163 (EQTS…NKLL), 1222–1637 (LDNR…ENTH), and 1675–1712 (KAKI…PEKT). The disordered stretch occupies residues 1464–1521 (KDSNHQLQESASSDAEQITKEQFEQLKSEKERTEKELADSKNELEHLQSEAVDADGKT). Polar residues predominate over residues 1468 to 1479 (HQLQESASSDAE). The span at 1480 to 1521 (QITKEQFEQLKSEKERTEKELADSKNELEHLQSEAVDADGKT) shows a compositional bias: basic and acidic residues. Ser1558 carries the post-translational modification Phosphoserine. At Thr1560 the chain carries Phosphothreonine. Ser1563 is modified (phosphoserine). Disordered regions lie at residues 1602-1642 (EKEK…NIDD) and 1700-1837 (ENLN…KKAK). Basic and acidic residues predominate over residues 1617-1628 (KSQRIKELEEQA). 4 stretches are compositionally biased toward polar residues: residues 1700–1730 (ENLN…SKPT), 1753–1763 (KSLSARLQGTG), 1795–1814 (IATS…TAKS), and 1827–1837 (GGSSSNQKKAK).

The protein localises to the cytoplasm. The protein resides in the nucleus. Its function is as follows. Functions as a component of the nuclear pore complex (NPC). NPC components, collectively referred to as nucleoporins (NUPs), can play the role of both NPC structural components and of docking or interaction partners for transiently associated nuclear transport factors. Active directional transport is assured by both, a Phe-Gly (FG) repeat affinity gradient for these transport factors across the NPC and a transport cofactor concentration gradient across the nuclear envelope. This is Nucleoporin nup211 (nup211) from Schizosaccharomyces pombe (strain 972 / ATCC 24843) (Fission yeast).